The sequence spans 578 residues: Protein RIK (578 aa).

The segment at 1–34 (MTEDNDEARVPLSDSSTTNDASRTRQRRKRKWDK) is disordered. The region spanning 206-273 (SSNVAARIRG…KSIDDAKRLA (68 aa)) is the KH domain. A compositionally biased stretch (polar residues) spans 413 to 425 (ATSLSIPSDNASN). The disordered stretch occupies residues 413–578 (ATSLSIPSDN…DPDEPLTTRS (166 aa)). The segment covering 472 to 492 (PPSPRSVMPPPPPKTIAPPPS) has biased composition (pro residues). 2 stretches are compositionally biased toward low complexity: residues 493-503 (KTMSPPSSKSM) and 510-521 (SKTMSPLSSKSM). The segment covering 560–572 (YGDDEDDDDDPDE) has biased composition (acidic residues).

As to quaternary structure, interacts with AS1. In terms of tissue distribution, expressed in vegetative tissues.

Its subcellular location is the nucleus. The sequence is that of Protein RIK (RIK) from Arabidopsis thaliana (Mouse-ear cress).